The sequence spans 35 residues: Photosystem II reaction center protein T (35 aa).

Residues 3 to 23 (ALVYTFLLVSTLGIIFFAIFF) traverse the membrane as a helical segment.

It belongs to the PsbT family. In terms of assembly, PSII is composed of 1 copy each of membrane proteins PsbA, PsbB, PsbC, PsbD, PsbE, PsbF, PsbH, PsbI, PsbJ, PsbK, PsbL, PsbM, PsbT, PsbY, PsbZ, Psb30/Ycf12, at least 3 peripheral proteins of the oxygen-evolving complex and a large number of cofactors. It forms dimeric complexes.

It localises to the plastid. The protein localises to the chloroplast thylakoid membrane. Its function is as follows. Found at the monomer-monomer interface of the photosystem II (PS II) dimer, plays a role in assembly and dimerization of PSII. PSII is a light-driven water plastoquinone oxidoreductase, using light energy to abstract electrons from H(2)O, generating a proton gradient subsequently used for ATP formation. The sequence is that of Photosystem II reaction center protein T from Cedrus deodara (Deodar cedar).